Here is a 252-residue protein sequence, read N- to C-terminus: Small ribosomal subunit protein uS3 (252 aa).

In terms of domain architecture, KH type-2 spans 39–111 (IRKLINNFAK…DVNLNVLEVK (73 aa)). A disordered region spans residues 226 to 252 (SQSSNNPNRRPRNFKGGNNNHVNAKKN).

This sequence belongs to the universal ribosomal protein uS3 family. Part of the 30S ribosomal subunit. Forms a tight complex with proteins S10 and S14.

Functionally, binds the lower part of the 30S subunit head. Binds mRNA in the 70S ribosome, positioning it for translation. In Aster yellows witches'-broom phytoplasma (strain AYWB), this protein is Small ribosomal subunit protein uS3.